The chain runs to 330 residues: Neurogenic differentiation factor 4 (330 aa).

The interval 1–79 (MTKTYTKAKE…RGPKKKKMTK (79 aa)) is disordered. Positions 25-35 (LSSKDELKAEN) are enriched in basic and acidic residues. A compositionally biased stretch (acidic residues) spans 52 to 64 (DSIEEEEEEEDDG). Basic residues predominate over residues 67–79 (PKRRGPKKKKMTK). A Nuclear localization signal motif is present at residues 73–79 (KKKKMTK). Positions 87–139 (ARRVKANARERTRMHGLNDALDNLRRVMPCYSKTQKLSKIETLRLARNYIWAL) constitute a bHLH domain. Positions 162 to 183 (LSQPTSNLVAGCLQLGPQTLFL) are leucine-zipper.

As to quaternary structure, efficient DNA binding requires dimerization with another bHLH protein. Post-translationally, serine or threonine phosphorylation within the basic region may regulate neurogenic activity. As to expression, expressed in both the developing central nervous system and peripheral nervous system.

Its subcellular location is the nucleus. Functionally, probably acts as a transcriptional activator. Mediates neuronal differentiation. Required for the regulation of amacrine cell fate specification in the retina. In Gallus gallus (Chicken), this protein is Neurogenic differentiation factor 4 (NEUROD4).